The primary structure comprises 327 residues: tRNA dimethylallyltransferase (327 aa).

14–21 lines the ATP pocket; sequence GPTASGKT. 16-21 provides a ligand contact to substrate; that stretch reads TASGKT. 2 interaction with substrate tRNA regions span residues 39–42 and 163–167; these read DSAL and QRIQR.

The protein belongs to the IPP transferase family. Monomer. Mg(2+) serves as cofactor.

It carries out the reaction adenosine(37) in tRNA + dimethylallyl diphosphate = N(6)-dimethylallyladenosine(37) in tRNA + diphosphate. In terms of biological role, catalyzes the transfer of a dimethylallyl group onto the adenine at position 37 in tRNAs that read codons beginning with uridine, leading to the formation of N6-(dimethylallyl)adenosine (i(6)A). This Xanthomonas campestris pv. campestris (strain 8004) protein is tRNA dimethylallyltransferase.